The primary structure comprises 253 residues: Putative glutamine amidotransferase PB2B2.05 (253 aa).

The Glutamine amidotransferase type-1 domain maps to isoleucine 5–glutamine 228. Catalysis depends on cysteine 100, which acts as the Nucleophile. Active-site residues include histidine 200 and glutamate 202.

It localises to the cytoplasm. It is found in the nucleus. This is Putative glutamine amidotransferase PB2B2.05 from Schizosaccharomyces pombe (strain 972 / ATCC 24843) (Fission yeast).